Here is a 192-residue protein sequence, read N- to C-terminus: dTDP-3-amino-3,6-dideoxy-alpha-D-galactopyranose 3-N-acetyltransferase (192 aa).

The protein belongs to the transferase hexapeptide repeat family.

The enzyme catalyses dTDP-3-amino-3,6-dideoxy-alpha-D-galactopyranose + acetyl-CoA = dTDP-3-acetamido-3,6-dideoxy-alpha-D-galactopyranose + CoA + H(+). Catalyzes the transfer of an acetyl group to dTDP-D-Fucp3N to form dTDP-D-Fucp3NAc in the biosynthesis of dTDP-3-acetamido-3,6-dideoxy-alpha-D-galactose, a glycan chain of the S-layer. This is dTDP-3-amino-3,6-dideoxy-alpha-D-galactopyranose 3-N-acetyltransferase (fdtC) from Aneurinibacillus thermoaerophilus.